Consider the following 264-residue polypeptide: Glutamate racemase (264 aa).

Substrate is bound by residues 10-11 (DS) and 42-43 (YG). Residue Cys-73 is the Proton donor/acceptor of the active site. 74-75 (NT) is a substrate binding site. Cys-183 serves as the catalytic Proton donor/acceptor. 184 to 185 (TH) provides a ligand contact to substrate.

The protein belongs to the aspartate/glutamate racemases family.

It carries out the reaction L-glutamate = D-glutamate. It participates in cell wall biogenesis; peptidoglycan biosynthesis. In terms of biological role, provides the (R)-glutamate required for cell wall biosynthesis. The polypeptide is Glutamate racemase (Streptococcus pneumoniae (strain ATCC BAA-255 / R6)).